Reading from the N-terminus, the 653-residue chain is Choline transporter-like protein 1 (653 aa).

Residue Gly2 is the site of N-myristoyl glycine attachment. Over Gly2 to Pro29 the chain is Cytoplasmic. Residues Trp30–Ala50 form a helical membrane-spanning segment. The Mitochondrial intermembrane segment spans residues Thr51–Lys211. The chain crosses the membrane as a helical span at residues Glu212–Ile232. Topologically, residues Arg233 to Arg237 are cytoplasmic. The helical transmembrane segment at Val238–Leu258 threads the bilayer. Residues Trp259 to Ala287 are Mitochondrial intermembrane-facing. A helical membrane pass occupies residues Leu288–Val308. The Cytoplasmic segment spans residues Met309–Ala314. Residues Leu315–Phe335 form a helical membrane-spanning segment. The Mitochondrial intermembrane segment spans residues Gln336–Pro337. Residues Phe338–Leu358 form a helical membrane-spanning segment. Residues Gly359–Pro379 are Cytoplasmic-facing. Residues Leu380–Ala400 form a helical membrane-spanning segment. Residues Cys401–Asp536 are Mitochondrial intermembrane-facing. Residues Phe537–Leu557 traverse the membrane as a helical segment. Residues Leu558–Thr565 are Cytoplasmic-facing. Residues Val566–Leu586 form a helical membrane-spanning segment. At Ser587 to Arg653 the chain is on the mitochondrial intermembrane side.

This sequence belongs to the CTL (choline transporter-like) family. As to expression, specifically abundant in skeletal muscle (at protein level).

It localises to the cell membrane. The protein localises to the mitochondrion outer membrane. It catalyses the reaction choline(out) + n H(+)(in) = choline(in) + n H(+)(out). The catalysed reaction is ethanolamine(out) + n H(+)(in) = ethanolamine(in) + n H(+)(out). Functionally, choline/H+ antiporter. Also acts as a high-affinity ethanolamine/H+ antiporter, regulating the supply of extracellular ethanolamine (Etn) for the CDP-Etn pathway, redistribute intracellular Etn and balance the CDP-Cho and CDP-Etn arms of the Kennedy pathway. Involved in membrane synthesis and myelin production. The polypeptide is Choline transporter-like protein 1 (Slc44a1) (Mus musculus (Mouse)).